The chain runs to 355 residues: 3-dehydroquinate synthase (355 aa).

NAD(+) contacts are provided by residues 71 to 76 (EGEERK), 105 to 109 (GVVGD), 129 to 130 (TS), Lys142, and Lys151. The Zn(2+) site is built by Glu184, His246, and His263.

This sequence belongs to the sugar phosphate cyclases superfamily. Dehydroquinate synthase family. NAD(+) is required as a cofactor. It depends on Co(2+) as a cofactor. Zn(2+) serves as cofactor.

Its subcellular location is the cytoplasm. It catalyses the reaction 7-phospho-2-dehydro-3-deoxy-D-arabino-heptonate = 3-dehydroquinate + phosphate. It participates in metabolic intermediate biosynthesis; chorismate biosynthesis; chorismate from D-erythrose 4-phosphate and phosphoenolpyruvate: step 2/7. Its function is as follows. Catalyzes the conversion of 3-deoxy-D-arabino-heptulosonate 7-phosphate (DAHP) to dehydroquinate (DHQ). The polypeptide is 3-dehydroquinate synthase (Streptococcus pneumoniae (strain ATCC BAA-255 / R6)).